Here is a 100-residue protein sequence, read N- to C-terminus: Small ribosomal subunit protein uS14c (100 aa).

The protein belongs to the universal ribosomal protein uS14 family. In terms of assembly, part of the 30S ribosomal subunit.

Its subcellular location is the plastid. The protein resides in the chloroplast. Binds 16S rRNA, required for the assembly of 30S particles. This is Small ribosomal subunit protein uS14c from Stigeoclonium helveticum (Green alga).